The primary structure comprises 440 residues: 3-phosphoshikimate 1-carboxyvinyltransferase (440 aa).

Residues Lys-26, Ser-27, and Arg-31 each coordinate 3-phosphoshikimate. Residue Lys-26 participates in phosphoenolpyruvate binding. The phosphoenolpyruvate site is built by Gly-100 and Arg-134. 3-phosphoshikimate contacts are provided by Ser-180, Ser-181, Gln-182, Ser-208, Asp-323, Asn-346, and Lys-350. Gln-182 is a binding site for phosphoenolpyruvate. The active-site Proton acceptor is Asp-323. Positions 354, 398, and 423 each coordinate phosphoenolpyruvate.

This sequence belongs to the EPSP synthase family. In terms of assembly, monomer.

The protein resides in the cytoplasm. The catalysed reaction is 3-phosphoshikimate + phosphoenolpyruvate = 5-O-(1-carboxyvinyl)-3-phosphoshikimate + phosphate. It participates in metabolic intermediate biosynthesis; chorismate biosynthesis; chorismate from D-erythrose 4-phosphate and phosphoenolpyruvate: step 6/7. Functionally, catalyzes the transfer of the enolpyruvyl moiety of phosphoenolpyruvate (PEP) to the 5-hydroxyl of shikimate-3-phosphate (S3P) to produce enolpyruvyl shikimate-3-phosphate and inorganic phosphate. The sequence is that of 3-phosphoshikimate 1-carboxyvinyltransferase from Pasteurella multocida (strain Pm70).